A 109-amino-acid polypeptide reads, in one-letter code: MVRPLNDFHEAKVRIKLSSYSASLLNLSCNNVLQSIKESNTSVKGPVFLPTRRRVYCVLRSPHVNKDSREHFEIRSHFRIIDISSCSSETIEMLMRLDLPTGVNIEIKT.

Belongs to the universal ribosomal protein uS10 family. In terms of assembly, part of the 30S ribosomal subunit.

The protein resides in the plastid. The protein localises to the chloroplast. Functionally, involved in the binding of tRNA to the ribosomes. The protein is Small ribosomal subunit protein uS10c of Cyanidium caldarium (Red alga).